The sequence spans 421 residues: Adenylosuccinate synthetase (421 aa).

GTP is bound by residues 11-17 (GDEGKGK) and 39-41 (GHT). The active-site Proton acceptor is aspartate 12. Mg(2+)-binding residues include aspartate 12 and glycine 39. Residues 12 to 15 (DEGK), 37 to 40 (NAGH), threonine 124, arginine 138, glutamine 220, threonine 235, and arginine 299 contribute to the IMP site. Histidine 40 (proton donor) is an active-site residue. Residue 295-301 (TTTGRPR) participates in substrate binding. GTP-binding positions include arginine 301, 327 to 329 (KLD), and 409 to 411 (SVG).

It belongs to the adenylosuccinate synthetase family. Homodimer. Mg(2+) is required as a cofactor.

Its subcellular location is the cytoplasm. It carries out the reaction IMP + L-aspartate + GTP = N(6)-(1,2-dicarboxyethyl)-AMP + GDP + phosphate + 2 H(+). The protein operates within purine metabolism; AMP biosynthesis via de novo pathway; AMP from IMP: step 1/2. Plays an important role in the de novo pathway of purine nucleotide biosynthesis. Catalyzes the first committed step in the biosynthesis of AMP from IMP. This is Adenylosuccinate synthetase from Methanothrix thermoacetophila (strain DSM 6194 / JCM 14653 / NBRC 101360 / PT) (Methanosaeta thermophila).